The chain runs to 2349 residues: Reducing polyketide synthase hmp8 (2349 aa).

In terms of domain architecture, Ketosynthase family 3 (KS3) spans 9–435 (HVPVAIIGLA…GTNGHVVLEA (427 aa)). Residues cysteine 182, histidine 317, and histidine 357 each act as for beta-ketoacyl synthase activity in the active site. Residues 551–856 (FVFTGQGAQW…SHNGIKNVAY (306 aa)) are malonyl-CoA:ACP transacylase (MAT) domain. The segment at 930-1066 (RSLIGAPVPM…GLVAIDYEES (137 aa)) is N-terminal hotdog fold. In terms of domain architecture, PKS/mFAS DH spans 930 to 1250 (RSLIGAPVPM…TSELDMDSGK (321 aa)). The interval 932 to 1244 (LIGAPVPMMA…SVKDFRTSEL (313 aa)) is dehydratase (DH) domain. The Proton acceptor; for dehydratase activity role is filled by histidine 962. The tract at residues 1094-1250 (PEHYAHDKFY…TSELDMDSGK (157 aa)) is C-terminal hotdog fold. Residue aspartate 1160 is the Proton donor; for dehydratase activity of the active site. The segment at 1641 to 1953 (GLLDTLKFVP…QGKHRGKMVL (313 aa)) is enoyl reductase (ER) domain. The segment at 1977-2157 (ATYLFVGGLG…ISVNLGIMRD (181 aa)) is ketoreductase (KR) domain. The region spanning 2267-2344 (EAAEIITDAL…SFAVKIAEKS (78 aa)) is the Carrier domain. At serine 2304 the chain carries O-(pantetheine 4'-phosphoryl)serine.

It participates in secondary metabolite biosynthesis. Its function is as follows. Reducing polyketide synthase; part of the gene cluster that mediates the biosynthesis of hypothemycin, a resorcylic acid lactone (RAL) that irreversibly inhibits a subset of protein kinases with a conserved cysteine in the ATP binding site such as human ERK2. The first step is performed by both PKSs hmp3 and hmp8 and leads to the production of 7',8'-dehydrozearalenol (DHZ). The highly reducing PKS hpm8 synthesizes the reduced hexaketide (7S,11S,2E,8E)-7,11-dihydroxy-dodeca-2,8-dienoate, which is transferred downstream to the non-reducing PKS hpm3. Hpm3 then extends the reduced hexaketide to a nonaketide, after which regioselective cyclization and macrolactonization affords DHZ. The next step is the conversion of DHZ into aigialomycin C and is performed by the O-methyltransferase hmp5, the FAD-binding monooxygenase hmp7, and the cytochrome P450 monooxygenase hmp1. The wide substrate tolerance of the hmp5 and hmp7 implies that the reactions from DHZ to aigialomycin C can occur in any order. The steps from aigialomycin C to hypothemycin are less well established. The FAD-linked oxidoreductase hmp9 presumably catalyzes oxidation of the C-6' hydroxyl to a ketone. The timing of this oxidation is important, since the resulting enone functional group is a Michael acceptor that can react spontaneously with glutathione, an abundant metabolite in fungal cells. The glutathione S-transferase hmp2 catalyzes cis-trans isomerization of the 7',8' double bond with equilibrium favoring the trans isomer. The hpm6-encoded transporter might preferentially pump hypothemycin out of the cell relative to the trans isomer aigialomycin A. The cis-to-trans isomerization may be coupled with C-4' hydroxylation, since all known hypothemycin analogs containing the enone functional group also have hydroxyl groups at both C-4' and C-5'. This is Reducing polyketide synthase hmp8 from Hypomyces subiculosus (Nectria subiculosa).